The chain runs to 309 residues: Glutaminase (309 aa).

Serine 65, asparagine 117, glutamate 162, asparagine 169, tyrosine 193, tyrosine 245, and valine 263 together coordinate substrate.

The protein belongs to the glutaminase family. In terms of assembly, homotetramer.

The catalysed reaction is L-glutamine + H2O = L-glutamate + NH4(+). This Geobacillus thermodenitrificans (strain NG80-2) protein is Glutaminase.